The sequence spans 130 residues: Fluoride-specific ion channel FluC (130 aa).

The next 4 membrane-spanning stretches (helical) occupy residues 2-22, 36-56, 71-91, and 100-120; these read GLLLLLVGIGGGFGAMARFAL, GILLCNIIGSLIIGMMAAFLI, FLLVTGFLGGFTTFSSFSLDI, and IFIAIGYIMVSVLASLIAVIL. The Na(+) site is built by Gly-79 and Thr-82.

Belongs to the fluoride channel Fluc/FEX (TC 1.A.43) family.

It is found in the cell inner membrane. It catalyses the reaction fluoride(in) = fluoride(out). With respect to regulation, na(+) is not transported, but it plays an essential structural role and its presence is essential for fluoride channel function. Fluoride-specific ion channel. Important for reducing fluoride concentration in the cell, thus reducing its toxicity. The sequence is that of Fluoride-specific ion channel FluC from Francisella tularensis subsp. tularensis (strain FSC 198).